Here is a 391-residue protein sequence, read N- to C-terminus: Glycerol-3-phosphate dehydrogenase [NAD(+)] 1 (391 aa).

NAD(+)-binding positions include 41–46 (GSGNWG), Phe-129, Lys-152, and Ala-185. Lys-152 contacts substrate. Lys-245 (proton acceptor) is an active-site residue. Arg-310 and Gln-339 together coordinate NAD(+). 310 to 311 (RN) lines the substrate pocket.

It belongs to the NAD-dependent glycerol-3-phosphate dehydrogenase family.

The protein resides in the cytoplasm. It catalyses the reaction sn-glycerol 3-phosphate + NAD(+) = dihydroxyacetone phosphate + NADH + H(+). The protein is Glycerol-3-phosphate dehydrogenase [NAD(+)] 1 (GPD1) of Saccharomyces uvarum (Yeast).